The primary structure comprises 278 residues: Sulfur carrier protein FdhD (278 aa).

The active-site Cysteine persulfide intermediate is cysteine 121. 260-265 (FCKPGR) serves as a coordination point for Mo-bis(molybdopterin guanine dinucleotide).

Belongs to the FdhD family.

Its subcellular location is the cytoplasm. Required for formate dehydrogenase (FDH) activity. Acts as a sulfur carrier protein that transfers sulfur from IscS to the molybdenum cofactor prior to its insertion into FDH. The polypeptide is Sulfur carrier protein FdhD (Salmonella schwarzengrund (strain CVM19633)).